Consider the following 874-residue polypeptide: MFIKFLHKIFSNRNDRILKKFKKIVSSINQLEEKFKKLSDKKLQENTGIFRLRLKKGECLDDLLPESFATVREASRRVFNMRHFDVQILGGIVLNKQCIAEMRTGEGKTLTSTLPAYLNALTGRGVHIVTMNDYLAERDAKNNTPLFEFLGLTVGLNLPEMSFIDKKKAYLCDITYGTNNEYGFDYLRDNMIFSAEERVQRELNYALIDEVDSILIDEARTPLIISGPSEDSSFLYKEINKLVPSLICQKKEDSDKFHGNGHFSIDEKSKQIYLTERGLVEVEKILLDRKLMKKEESLYSSNNIILMHHVISALRAHNLFTRNIDYLVKDNNIIIVDEHTGRTMPGRRWSDGLHQAIEAKENVTVRNENQTLASITFQNYFRLYKKIAGMTGTAATESFEFSSIYNLDTVIIPPNKPMIRKDLSDLVYMTEEEKINAILKDIKNCIKKNQPVLVGTISIEKSEMISKKLKILNIKHNVLNAKFHAREAEIIAQAGKPKSVTIATNMAGRGTDIVLGGSLESQLEKNMYLDKIETIKRNWKKQHDLVVLSGGLHIIGTERHESRRIDNQLRGRSGRQGDSGSSRFYLSMEDSLMRIFASDKIISMMRKLGLSLNEAIEHPWVTKAIENAQKKVENRNFDIRKQLLEYDDVCNEQRRVIYAQRNKLIDSENIQQNIYDILKDVLHSIIKTHLNFDFPKNTRNILDLENKLSIEFNLNISIKDWLKKDHDIKKENIIKKIIDIAKKNYLNKEIQIGFHNIRMIEKSIMLKTLDSLWKEHLSAMDYLRQGIHLRGYAQKDPKQEYKRESFNMFSNMLELLKYEVISFLSKLDISYIKSNLHLNMNNNSSIVNNDIKMGRNTPCFCKSGKKYKYCHGSL.

ATP is bound by residues Gln87, 105 to 109 (GEGKT), and Asp512. Zn(2+) contacts are provided by Cys859, Cys861, Cys870, and His871.

This sequence belongs to the SecA family. As to quaternary structure, monomer and homodimer. Part of the essential Sec protein translocation apparatus which comprises SecA, SecYEG and auxiliary proteins SecDF-YajC and YidC. The cofactor is Zn(2+).

It localises to the cell inner membrane. The protein resides in the cytoplasm. The catalysed reaction is ATP + H2O + cellular proteinSide 1 = ADP + phosphate + cellular proteinSide 2.. Part of the Sec protein translocase complex. Interacts with the SecYEG preprotein conducting channel. Has a central role in coupling the hydrolysis of ATP to the transfer of proteins into and across the cell membrane, serving both as a receptor for the preprotein-SecB complex and as an ATP-driven molecular motor driving the stepwise translocation of polypeptide chains across the membrane. The chain is Protein translocase subunit SecA from Buchnera aphidicola subsp. Schizaphis graminum (strain Sg).